A 358-amino-acid chain; its full sequence is Heat-inducible transcription repressor HrcA (358 aa).

This sequence belongs to the HrcA family.

Negative regulator of class I heat shock genes (grpE-dnaK-dnaJ and groELS operons). Prevents heat-shock induction of these operons. The protein is Heat-inducible transcription repressor HrcA of Caulobacter vibrioides (strain ATCC 19089 / CIP 103742 / CB 15) (Caulobacter crescentus).